We begin with the raw amino-acid sequence, 500 residues long: Centrosomal protein of 57 kDa (500 aa).

The segment covering 1-16 has biased composition (low complexity); sequence MAAASVSAASDSQFSS. Positions 1–59 are disordered; it reads MAAASVSAASDSQFSSVLAEPSRSNGNMVRHSSSPYVLYPPDKPFLNSDLRRSPNKPTF. Positions 22–35 are enriched in polar residues; that stretch reads SRSNGNMVRHSSSP. At Ser53 the chain carries Phosphoserine. Residues 58–239 are centrosome localization domain (CLD); sequence TFAYPESNSR…RAAELQSGLE (182 aa). Residues 63 to 242 adopt a coiled-coil conformation; that stretch reads ESNSRAIFSA…ELQSGLEANR (180 aa). Disordered regions lie at residues 256–275 and 432–478; these read STRKIKKKKSKPPEKKGSRT and QKKE…RKNL. The mediates interaction with microtubules stretch occupies residues 278-491; sequence GAQPHYRLCL…KDMQTIQNSL (214 aa). The stretch at 389–449 forms a coiled coil; the sequence is TVELKDNLEC…KKTLDEEGNS (61 aa). Composition is skewed to basic and acidic residues over residues 432 to 444 and 461 to 475; these read QKKELKANKKTLD and SKKDLAKQRPGEKSR.

This sequence belongs to the translokin family. Interacts with FGF2 and RAP80. Does not interact with FGF1 or FGF2 isoform 24 kDa. Homodimer and homooligomer. Interacts with microtubules. In terms of tissue distribution, ubiquitous (at protein level). Expressed in testis, predominantly in round spermatids. Low expression is detected in other tissues.

Its subcellular location is the nucleus. The protein localises to the cytoplasm. It localises to the cytoskeleton. The protein resides in the microtubule organizing center. It is found in the centrosome. Centrosomal protein which may be required for microtubule attachment to centrosomes. May act by forming ring-like structures around microtubules. Mediates nuclear translocation and mitogenic activity of the internalized growth factor FGF2. This is Centrosomal protein of 57 kDa (Cep57) from Mus musculus (Mouse).